The primary structure comprises 747 residues: Fatty acid oxidation complex subunit alpha (747 aa).

Positions 1–197 are enoyl-CoA hydratase; that stretch reads MGASATNSVT…KMGLVDDVVP (197 aa). A 3-hydroxyacyl-CoA dehydrogenase region spans residues 313 to 747; that stretch reads RAIHRVGVLG…NIDEVTDVAS (435 aa). The tract at residues 590–614 is disordered; sequence YLYSNPTKNSSPTKNGNSPAKRNSF. The span at 593 to 610 shows a compositional bias: polar residues; sequence SNPTKNSSPTKNGNSPAK.

In the N-terminal section; belongs to the enoyl-CoA hydratase/isomerase family. This sequence in the central section; belongs to the 3-hydroxyacyl-CoA dehydrogenase family. Heterotetramer of two alpha chains (FadJ) and two beta chains (FadI).

The protein localises to the cytoplasm. The catalysed reaction is a (3S)-3-hydroxyacyl-CoA = a (2E)-enoyl-CoA + H2O. It carries out the reaction a 4-saturated-(3S)-3-hydroxyacyl-CoA = a (3E)-enoyl-CoA + H2O. The enzyme catalyses a (3S)-3-hydroxyacyl-CoA + NAD(+) = a 3-oxoacyl-CoA + NADH + H(+). It catalyses the reaction (3S)-3-hydroxybutanoyl-CoA = (3R)-3-hydroxybutanoyl-CoA. Its pathway is lipid metabolism; fatty acid beta-oxidation. Catalyzes the formation of a hydroxyacyl-CoA by addition of water on enoyl-CoA. Also exhibits 3-hydroxyacyl-CoA epimerase and 3-hydroxyacyl-CoA dehydrogenase activities. This chain is Fatty acid oxidation complex subunit alpha, found in Yersinia pseudotuberculosis serotype O:1b (strain IP 31758).